We begin with the raw amino-acid sequence, 230 residues long: Maleylacetoacetate isomerase (230 aa).

In terms of domain architecture, GST N-terminal spans Leu7–Pro95. Residues Ser17–Arg22, Gln46, Val60, Gln79–Ser80, Gln123, and Asn127–Arg129 contribute to the glutathione site. The GST C-terminal domain occupies Asn104–Thr226.

Belongs to the GST superfamily. Zeta family. Glutathione serves as cofactor.

Its subcellular location is the cytoplasm. The catalysed reaction is 4-maleylacetoacetate = 4-fumarylacetoacetate. Its pathway is amino-acid degradation; L-phenylalanine degradation; acetoacetate and fumarate from L-phenylalanine: step 5/6. This Emericella nidulans (strain FGSC A4 / ATCC 38163 / CBS 112.46 / NRRL 194 / M139) (Aspergillus nidulans) protein is Maleylacetoacetate isomerase (maiA).